The sequence spans 260 residues: MSDPITLNVGGKLYTTSLATLTSFPDSMLGAMFSGKMPTKRDSQGNCFIDRDGKVFRYILNFLRTSHLDLPEDFQEMGLLRREADFYQVQPLIEALQEKEVELSKAEKNAMLNITLNQRVQTVHFTVREAPQIYSLSSSSMEVFNANIFSTSCLFLKLLGSKLFYCSNGNLSSITSHLQDPNHLTLDWVANVEGLPEEEYTKQNLKRLWVVPANKQINSFQVFVEEVLKIALSDGFCIDSSHPHALDFMNNKIIRLIRYR.

The BTB domain maps to 3–72 (DPITLNVGGK…LRTSHLDLPE (70 aa)). A coiled-coil region spans residues 88–112 (QVQPLIEALQEKEVELSKAEKNAML).

As to quaternary structure, homopentamer. Interacts with KCTD11; KCTD21 and KCTD11 may associate in pentameric assemblies. Interacts (via BTB domain) with CUL3; indicative for a participation in a BCR (BTB-CUL3-RBX1) E3 ubiquitin-protein ligase complex. As to expression, highly expressed in cerebellum and brain. Expression is down-regulated in medulloblastoma.

Its pathway is protein modification; protein ubiquitination. Its function is as follows. Probable substrate-specific adapter of a BCR (BTB-CUL3-RBX1) E3 ubiquitin-protein ligase complex mediating the ubiquitination and subsequent proteasomal degradation of target proteins. Promotes the ubiquitination of HDAC1. Can function as antagonist of the Hedgehog pathway by affecting the nuclear transfer of transcription factor GLI1; the function probably occurs via HDAC1 down-regulation, keeping GLI1 acetylated and inactive. Inhibits cell growth and tumorigenicity of medulloblastoma (MDB). The protein is BTB/POZ domain-containing protein KCTD21 (KCTD21) of Homo sapiens (Human).